The primary structure comprises 347 residues: Gas vesicle ATPase GvpN1 (347 aa).

A compositionally biased stretch (basic residues) spans 1–11 (MTNESRKRKVR). Positions 1–64 (MTNESRKRKV…EGFVPEEQSF (64 aa)) are disordered. Basic and acidic residues predominate over residues 18 to 55 (SRGDKKQGRSQSRDDKEIERLERQNDARGQESSTHVDE). 91-98 (GPTGCGKT) is a binding site for ATP.

It belongs to the CbbQ/NirQ/NorQ/GpvN family. As to quaternary structure, forms homodimers, forms a GvpN1-GvpO1 heterodimer, interacts with GvpC1 (via the latter's C-terminus) and GvpL, might interact with GvpA1.

Its subcellular location is the gas vesicle. It is found in the cytoplasm. The catalysed reaction is ATP + H2O = ADP + phosphate + H(+). An ATPase that functions in gas vesicle formation. A minor component of the gas vesicle, also found in soluble extracts. Probably enhances gas vesicle formation. Gas vesicles are hollow, gas filled proteinaceous nanostructures found in several microbial planktonic microorganisms. They allow positioning of halobacteria at the optimal depth for growth in the poorly aerated, shallow brine pools of their habitat. Its function is as follows. Expression of a 9.5 kb p-vac DNA fragment containing 2 divergently transcribed regions (gvpD-gvpE-gvpF-gvpG-gvpH-gvpI-gvpJ-gvpK-gvpL-gvpM and gvpA-gvpC-gvpN-gvpO) allows H.volcanii to produce gas vesicles. A similar region restores gas vesicle production in H.halobium without the p-vac locus, but which still have the c-vac locus. The chain is Gas vesicle ATPase GvpN1 (gvpN11) from Halobacterium salinarum (strain ATCC 700922 / JCM 11081 / NRC-1) (Halobacterium halobium).